Here is an 866-residue protein sequence, read N- to C-terminus: Putative linoleate 9S-lipoxygenase 3 (866 aa).

The PLAT domain occupies 33–161; it reads NDFGATVIDG…KYRYDRVFFA (129 aa). The 703-residue stretch at 164–866 folds into the Lipoxygenase domain; the sequence is AYLPSQMPAA…AKGIPNSISI (703 aa). The segment at 206 to 250 is disordered; the sequence is YNDLGSPDSGNPRPILGGSPDTPYPRRGRTGRKPTTTDPDSESRL. Residues histidine 521, histidine 526, histidine 712, asparagine 716, and isoleucine 866 each coordinate Fe cation.

The protein belongs to the lipoxygenase family. Fe cation serves as cofactor.

It catalyses the reaction (9Z,12Z)-octadecadienoate + O2 = (9S)-hydroperoxy-(10E,12Z)-octadecadienoate. The protein operates within lipid metabolism; oxylipin biosynthesis. Plant lipoxygenase may be involved in a number of diverse aspects of plant physiology including growth and development, pest resistance, and senescence or responses to wounding. Catalyzes the hydroperoxidation of lipids containing a cis,cis-1,4-pentadiene structure. This chain is Putative linoleate 9S-lipoxygenase 3, found in Oryza sativa subsp. japonica (Rice).